The following is a 294-amino-acid chain: 33 kDa chaperonin (294 aa).

Intrachain disulfides connect C239-C241 and C272-C275.

It belongs to the HSP33 family. Post-translationally, under oxidizing conditions two disulfide bonds are formed involving the reactive cysteines. Under reducing conditions zinc is bound to the reactive cysteines and the protein is inactive.

It is found in the cytoplasm. In terms of biological role, redox regulated molecular chaperone. Protects both thermally unfolding and oxidatively damaged proteins from irreversible aggregation. Plays an important role in the bacterial defense system toward oxidative stress. This is 33 kDa chaperonin from Listeria monocytogenes serovar 1/2a (strain ATCC BAA-679 / EGD-e).